Consider the following 4017-residue polypeptide: Hybrid PKS-NRPS synthetase cghG (4017 aa).

Residues 6–438 form the Ketosynthase family 3 (KS3) domain; the sequence is QEPIAVIGMA…GTNAHAIIES (433 aa). Active-site for beta-ketoacyl synthase activity residues include Cys179, His318, and His358. Positions 549-869 are malonyl-CoA:ACP transacylase (MAT) domain; that stretch reads VFTGQGAQWP…GRNKNDVVEL (321 aa). Residues 936–1072 are N-terminal hotdog fold; that stretch reads NPILGRRCVE…ATLHVRFHEP (137 aa). The region spanning 936–1243 is the PKS/mFAS DH domain; that stretch reads NPILGRRCVE…VKPFAAATAR (308 aa). A dehydratase (DH) domain region spans residues 937–1240; sequence PILGRRCVET…AVQVKPFAAA (304 aa). The active-site Proton acceptor; for dehydratase activity is His969. Residues 1087–1243 are C-terminal hotdog fold; that stretch reads LVKTDPGRLY…VKPFAAATAR (157 aa). The active-site Proton donor; for dehydratase activity is Asp1147. The tract at residues 1398–1585 is methyltransferase (MT) domain; sequence VANVWIARMV…GVDTHCPVEK (188 aa). The interval 2127 to 2300 is ketoreductase (KR)domain; the sequence is TYFLVGLSGE…XXXXXXXXXX (174 aa). Residues 2423-2499 form the Carrier 1 domain; that stretch reads AVVQDSLTEN…SLAEEAMAKI (77 aa). Residue Ser2458 is modified to O-(pantetheine 4'-phosphoryl)serine. 2 disordered regions span residues 2547-2606 and 2613-2632; these read VSEA…LQHR and WAGS…AQRH. The segment covering 2548–2578 has biased composition (polar residues); it reads SEASGVSATTPSTRAETDASSSPALVSTPGT. The tract at residues 2626–3020 is condensation; sequence RRAAQRHETL…GDAMETEKLQ (395 aa). Residues 3053–3453 form an adenylation region; that stretch reads EVIAQNPTAV…SGFLAIEGRI (401 aa). The tract at residues 3567 to 3586 is disordered; sequence PKTTTASTTADGTQPAQPLT. A compositionally biased stretch (low complexity) spans 3569 to 3579; sequence TTTASTTADGT. A Carrier 2 domain is found at 3583–3661; the sequence is QPLTPTESRL…SMAALLDQAG (79 aa). A thiolation region spans residues 3588–3658; it reads TESRLATLWA…ELGSMAALLD (71 aa). An O-(pantetheine 4'-phosphoryl)serine modification is found at Ser3621. Residues 3696–3920 form a reductase-like region; it reads VTGASGSLGK…DVGRLEDVAA (225 aa).

It in the C-terminal section; belongs to the NRP synthetase family.

The catalysed reaction is (2S,4S)-4-hydroxy-4-methylglutamate + 8 malonyl-CoA + 3 S-adenosyl-L-methionine + ATP + 8 NADPH + 11 H(+) = (2S)-3-[(2S)-3,5-dioxo-4-[(2E,4R,6R,8E,10E,12E)-4,6,12-trimethyltetradeca-2,8,10,12-tetraenoyl]pyrrolidin-2-yl]-2-hydroxy-2-methylpropanoate + AMP + 3 S-adenosyl-L-homocysteine + 8 CO2 + diphosphate + 8 NADP(+) + 8 CoA + 6 H2O. The protein operates within secondary metabolite biosynthesis. In terms of biological role, hybrid PKS-NRPS synthetase; part of the gene cluster that mediates the biosynthesis of the tetramic acid Sch210972, a potential anti-HIV fungal natural product that contains a decalin core. The PKS module of cghG together with the enoylreductase cghC catalyze the formation of the polyketide unit which is then conjugated to 4-hydroxyl-4-methyl glutamate (HMG) by the condensation domain of the cghG NRPS module. One unique structural feature of Sch210972 is the tetramic acid motif proposed to be derived from the non-proteinogenic amino acid HMG, by a Dieckmann-type condensation catalyzed by the reductase domain of cghG. The aldolase cghB catalyzes the aldol condensation of 2 molecules of pyruvic acid to yield the intermediate 4-hydroxyl-4-methyl-2-oxoglutarate (HMOG), which can then be stereoselectively transaminated by an unidentified enzyme to form HMG. The Diels-Alderase cghA then uses the Dieckmann product released by cghG as substrate and catalyzes the Diels-Alder cycloaddition to form the decalin ring of Sch210972. CghA also suppresses the nonenzymatic formation of the alternative stereoisomer. The protein is Hybrid PKS-NRPS synthetase cghG of Chaetomium globosum (strain ATCC 6205 / CBS 148.51 / DSM 1962 / NBRC 6347 / NRRL 1970) (Soil fungus).